Consider the following 320-residue polypeptide: o-succinylbenzoate synthase (320 aa).

Residue K133 is the Proton donor of the active site. Mg(2+) is bound by residues D161, E190, and D213. Residue K235 is the Proton acceptor of the active site.

The protein belongs to the mandelate racemase/muconate lactonizing enzyme family. MenC type 1 subfamily. A divalent metal cation is required as a cofactor.

It catalyses the reaction (1R,6R)-6-hydroxy-2-succinyl-cyclohexa-2,4-diene-1-carboxylate = 2-succinylbenzoate + H2O. It functions in the pathway quinol/quinone metabolism; 1,4-dihydroxy-2-naphthoate biosynthesis; 1,4-dihydroxy-2-naphthoate from chorismate: step 4/7. Its pathway is quinol/quinone metabolism; menaquinone biosynthesis. Its function is as follows. Converts 2-succinyl-6-hydroxy-2,4-cyclohexadiene-1-carboxylate (SHCHC) to 2-succinylbenzoate (OSB). This is o-succinylbenzoate synthase from Escherichia coli O81 (strain ED1a).